Here is a 179-residue protein sequence, read N- to C-terminus: Large ribosomal subunit protein uL6 (179 aa).

Belongs to the universal ribosomal protein uL6 family. As to quaternary structure, part of the 50S ribosomal subunit.

This protein binds to the 23S rRNA, and is important in its secondary structure. It is located near the subunit interface in the base of the L7/L12 stalk, and near the tRNA binding site of the peptidyltransferase center. The chain is Large ribosomal subunit protein uL6 from Bifidobacterium longum (strain DJO10A).